Reading from the N-terminus, the 1145-residue chain is Adenylate cyclase type 3 (1145 aa).

The Cytoplasmic portion of the chain corresponds to 1 to 79; that stretch reads MPRNQGFSDP…FKRQRHETLL (79 aa). Helical transmembrane passes span 80 to 100, 105 to 125, 139 to 159, 173 to 193, and 226 to 246; these read VLVV…AVVF, LAPL…FVLC, VPYL…GLNF, AFFV…IVII, and ILAN…SYYM. Mg(2+)-binding residues include Asp-324, Ile-325, and Asp-368. Residues 324-329 and 366-368 each bind ATP; these read DIVGFT and LGD. The helical transmembrane segment at 381–401 threads the bilayer; that stretch reads EDHAVCSILMGLAMVEAISYV. Residues 402 to 631 lie on the Cytoplasmic side of the membrane; the sequence is REKTKTGVDM…RYSVEKEKQS (230 aa). Arg-412 contributes to the ATP binding site. Residue Lys-465 forms a Glycyl lysine isopeptide (Lys-Gly) (interchain with G-Cter in SUMO3) linkage. Residues 504-564 form a disordered region; the sequence is QNGLNGSAVP…DNPSFPNPRR (61 aa). Low complexity-rich tracts occupy residues 516-526 and 535-544; these read APASSKPSSPA and GSAHASGSTS. Residue Ser-524 is modified to Phosphoserine. Residue Ser-579 is modified to Phosphoserine. 3 consecutive transmembrane segments (helical) span residues 632–652, 663–683, and 707–727; these read GAAF…EILI, FVVG…AIFP, and WAML…LSCL. A glycan (N-linked (GlcNAc...) asparagine) is linked at Asn-735. 3 helical membrane-spanning segments follow: residues 753-773, 774-794, and 834-854; these read YNYV…VSHM, VKLT…LYAW, and LPLV…MLSF. The Cytoplasmic segment spans residues 855 to 1145; that stretch reads YYFSRHVEKL…TLPHQVVDNP (291 aa). Residues Lys-976, 1063–1065, and 1070–1074 contribute to the ATP site; these read DIW and NVASR. Phosphoserine; by CaMK2 is present on Ser-1077. ATP is bound at residue Lys-1110.

Belongs to the adenylyl cyclase class-4/guanylyl cyclase family. The cofactor is Mg(2+). Mn(2+) is required as a cofactor. Post-translationally, N-glycosylated. In terms of processing, rapidly phosphorylated after stimulation by odorants or forskolin. Phosphorylation by CaMK2 at Ser-1077 down-regulates enzyme activity. Sumoylated. Sumoylation is required for targeting of olfactory cilia. Detected in the acrosomal region of epididymal spermatozoa, the acrosomal region of round spermatids and in elongating spermatids. Detected in cilia in the olfactory epithelium (at protein level). Detected in olfactory epithelium neurons. Detected in brain, testis, late pachytene spermatocytes, round spermatids and elongating spermatids.

It localises to the cell membrane. The protein resides in the cell projection. The protein localises to the cilium. It is found in the golgi apparatus. Its subcellular location is the cytoplasm. It catalyses the reaction ATP = 3',5'-cyclic AMP + diphosphate. Specifically activated by the G alpha protein GNAL/G(olf) in signaling cascades triggered by odorant receptors. Activated by forskolin. After forskolin treatment, activity is further increased by calcium/calmodulin. In the absence of forskolin, calcium/calmodulin has little effect on enzyme activity. Functionally, catalyzes the formation of the signaling molecule cAMP in response to G-protein signaling. Participates in signaling cascades triggered by odorant receptors via its function in cAMP biosynthesis: specifically activated by G alpha protein GNAL/G(olf) in olfactory epithelium. Required for the perception of odorants. Required for normal sperm motility and normal male fertility. Plays a role in regulating insulin levels and body fat accumulation in response to a high fat diet. The polypeptide is Adenylate cyclase type 3 (Adcy3) (Mus musculus (Mouse)).